A 351-amino-acid polypeptide reads, in one-letter code: Histidinol-phosphate aminotransferase (351 aa).

Lys-213 carries the post-translational modification N6-(pyridoxal phosphate)lysine.

This sequence belongs to the class-II pyridoxal-phosphate-dependent aminotransferase family. Histidinol-phosphate aminotransferase subfamily. As to quaternary structure, homodimer. The cofactor is pyridoxal 5'-phosphate.

It catalyses the reaction L-histidinol phosphate + 2-oxoglutarate = 3-(imidazol-4-yl)-2-oxopropyl phosphate + L-glutamate. The catalysed reaction is L-histidine + 2-oxoglutarate = 3-(imidazol-5-yl)pyruvate + L-glutamate. It functions in the pathway amino-acid biosynthesis; L-histidine biosynthesis; L-histidine from 5-phospho-alpha-D-ribose 1-diphosphate: step 7/9. In Caldanaerobacter subterraneus subsp. tengcongensis (strain DSM 15242 / JCM 11007 / NBRC 100824 / MB4) (Thermoanaerobacter tengcongensis), this protein is Histidinol-phosphate aminotransferase.